The sequence spans 400 residues: Probable splicing factor YJU2B (400 aa).

The segment at 1–26 (MGERKGVNKYYPPDFNPEKHGSLNRY) is disordered. Phosphoserine is present on serine 40. Positions 182 to 214 (LNSMLRKRFREKKKAMQEEEERDQALQAKASLA) form a coiled coil. The segment at 255–400 (WFPSTPGASA…VADYSGSESE (146 aa)) is disordered. Over residues 283 to 292 (RRATPTSSPV) the composition is skewed to polar residues. Residue serine 310 is modified to Phosphoserine. Residues 327–341 (EGTNQNRPVSPQDCS) show a composition bias toward polar residues. Residues 364–380 (PQPPPDTSPEAPNPQDT) are compositionally biased toward pro residues.

The protein belongs to the CWC16 family.

Its subcellular location is the nucleus. May be involved in mRNA splicing. This Bos taurus (Bovine) protein is Probable splicing factor YJU2B (YJU2B).